The following is a 154-amino-acid chain: Myoglobin (154 aa).

The Globin domain occupies 2-148 (GLSDGEWQSV…FRNDIAAKYK (147 aa)). A Phosphoserine modification is found at serine 4. Nitrite is bound at residue histidine 65. Histidine 65 provides a ligand contact to O2. Threonine 68 is modified (phosphothreonine). Residue histidine 94 participates in heme b binding.

The protein belongs to the globin family. In terms of assembly, monomeric.

It localises to the cytoplasm. Its subcellular location is the sarcoplasm. It catalyses the reaction Fe(III)-heme b-[protein] + nitric oxide + H2O = Fe(II)-heme b-[protein] + nitrite + 2 H(+). The enzyme catalyses H2O2 + AH2 = A + 2 H2O. Its function is as follows. Monomeric heme protein which primary function is to store oxygen and facilitate its diffusion within muscle tissues. Reversibly binds oxygen through a pentacoordinated heme iron and enables its timely and efficient release as needed during periods of heightened demand. Depending on the oxidative conditions of tissues and cells, and in addition to its ability to bind oxygen, it also has a nitrite reductase activity whereby it regulates the production of bioactive nitric oxide. Under stress conditions, like hypoxia and anoxia, it also protects cells against reactive oxygen species thanks to its pseudoperoxidase activity. The chain is Myoglobin (MB) from Nycticebus coucang (Slow loris).